Reading from the N-terminus, the 496-residue chain is GPI mannosyltransferase 4 (496 aa).

Helical transmembrane passes span 5–25, 56–73, and 85–105; these read LIWL…YIHP, ARSY…FYLM, and ILRI…YYAL. A glycan (N-linked (GlcNAc...) asparagine) is linked at N156. Transmembrane regions (helical) follow at residues 174 to 194, 207 to 227, 261 to 281, 286 to 306, 311 to 328, and 337 to 357; these read GFLI…LLLP, WIQM…IVYF, PRYT…LLMI, NDFL…LSAL, LRFL…LTRF, and IWLV…QGGV. N-linked (GlcNAc...) asparagine glycosylation is present at N459.

This sequence belongs to the glycosyltransferase 22 family. PIGZ subfamily.

The protein localises to the endoplasmic reticulum membrane. Its pathway is glycolipid biosynthesis; glycosylphosphatidylinositol-anchor biosynthesis. Its function is as follows. Alpha-1,2-mannosyltransferase involved in glycosylphosphatidylinositol-anchor biosynthesis. Transfers a fourth mannose to trimannosyl-GPIs during GPI precursor assembly. The presence of a fourth mannose in GPI is essential in fungi. The sequence is that of GPI mannosyltransferase 4 (SMP3) from Candida glabrata (strain ATCC 2001 / BCRC 20586 / JCM 3761 / NBRC 0622 / NRRL Y-65 / CBS 138) (Yeast).